Consider the following 189-residue polypeptide: Cancer/testis antigen family 45 member A3 (189 aa).

Residues 81–119 are disordered; the sequence is KDRMMQKPGSNAPVGGNVTSSFSGDDLECRETASSPKSQ.

This sequence belongs to the CT45 family. In terms of tissue distribution, testis specific. Expressed in cancer cell lines.

The protein resides in the nucleus. The sequence is that of Cancer/testis antigen family 45 member A3 from Homo sapiens (Human).